A 516-amino-acid polypeptide reads, in one-letter code: Protein psiC (516 aa).

Positions 1 to 19 (MKILILSFFLILGINLVFC) are cleaved as a signal peptide. The PA14 domain occupies 109 to 249 (ESKDEPGIYV…YDACGVCLGK (141 aa)). N-linked (GlcNAc...) asparagine glycosylation is found at asparagine 134, asparagine 234, asparagine 250, asparagine 284, asparagine 333, asparagine 357, and asparagine 367. Positions 418 to 427 (DIIIDSSSDI) are enriched in low complexity. The interval 418-465 (DIIIDSSSDIPIPTLSPSPQPSRFPTDTPTNTPMPPTRPPTPTEDPKI) is disordered. The span at 449 to 460 (TPMPPTRPPTPT) shows a compositional bias: pro residues.

The protein belongs to the prespore-cell-inducing factor family.

It is found in the secreted. The polypeptide is Protein psiC (psiC) (Dictyostelium discoideum (Social amoeba)).